We begin with the raw amino-acid sequence, 196 residues long: Imidazoleglycerol-phosphate dehydratase (196 aa).

Belongs to the imidazoleglycerol-phosphate dehydratase family.

The protein localises to the cytoplasm. It carries out the reaction D-erythro-1-(imidazol-4-yl)glycerol 3-phosphate = 3-(imidazol-4-yl)-2-oxopropyl phosphate + H2O. It participates in amino-acid biosynthesis; L-histidine biosynthesis; L-histidine from 5-phospho-alpha-D-ribose 1-diphosphate: step 6/9. The polypeptide is Imidazoleglycerol-phosphate dehydratase (Clostridium botulinum (strain Langeland / NCTC 10281 / Type F)).